The sequence spans 352 residues: Putative [LysW]-L-2-aminoadipate/[LysW]-L-glutamate phosphate reductase (352 aa).

Residues 10–13 (SGFT) and 34–36 (SRR) contribute to the NADP(+) site. Residue C151 is part of the active site. N319 lines the NADP(+) pocket.

Belongs to the NAGSA dehydrogenase family. Type 1 subfamily. LysY sub-subfamily.

It localises to the cytoplasm. The catalysed reaction is [amino-group carrier protein]-C-terminal-N-(1-carboxy-5-oxopentan-1-yl)-L-glutamine + phosphate + NADP(+) = [amino-group carrier protein]-C-terminal-N-(1-carboxy-5-phosphooxy-5-oxopentan-1-yl)-L-glutamine + NADPH + H(+). The enzyme catalyses [amino-group carrier protein]-C-terminal-gamma-(L-glutamyl-5-semialdehyde)-L-glutamate + phosphate + NADP(+) = [amino-group carrier protein]-C-terminal-gamma-(5-phospho-L-glutamyl)-L-glutamate + NADPH + H(+). It functions in the pathway amino-acid biosynthesis; L-lysine biosynthesis via AAA pathway; L-lysine from L-alpha-aminoadipate (Thermus route): step 3/5. The protein operates within amino-acid biosynthesis; L-arginine biosynthesis. Its function is as follows. Involved in both the arginine and lysine biosynthetic pathways. This chain is Putative [LysW]-L-2-aminoadipate/[LysW]-L-glutamate phosphate reductase, found in Pyrobaculum islandicum (strain DSM 4184 / JCM 9189 / GEO3).